The following is an 875-amino-acid chain: Valine--tRNA ligase (875 aa).

The 'HIGH' region motif lies at 43–53 (PNVTGVLHMGH). The 'KMSKS' region signature appears at 534–538 (KMSKS). An ATP-binding site is contributed by K537. Residues 805-875 (GNLINTEEEL…LKESIAALKK (71 aa)) adopt a coiled-coil conformation.

It belongs to the class-I aminoacyl-tRNA synthetase family. ValS type 1 subfamily. In terms of assembly, monomer.

Its subcellular location is the cytoplasm. It carries out the reaction tRNA(Val) + L-valine + ATP = L-valyl-tRNA(Val) + AMP + diphosphate. Its function is as follows. Catalyzes the attachment of valine to tRNA(Val). As ValRS can inadvertently accommodate and process structurally similar amino acids such as threonine, to avoid such errors, it has a 'posttransfer' editing activity that hydrolyzes mischarged Thr-tRNA(Val) in a tRNA-dependent manner. In Phocaeicola vulgatus (strain ATCC 8482 / DSM 1447 / JCM 5826 / CCUG 4940 / NBRC 14291 / NCTC 11154) (Bacteroides vulgatus), this protein is Valine--tRNA ligase.